We begin with the raw amino-acid sequence, 517 residues long: zeta-carotene-forming phytoene desaturase (517 aa).

Position 11 to 44 (11 to 44 (VVVGAGVGGLAAAARLAHQGFDVQVFEKTQGPGG)) interacts with FAD.

Belongs to the carotenoid/retinoid oxidoreductase family. FAD is required as a cofactor.

The enzyme catalyses 15-cis-phytoene + 2 A = all-trans-zeta-carotene + 2 AH2. Its pathway is carotenoid biosynthesis; lycopene biosynthesis. Functionally, dehydrogenates carotenes in the cis conformation: has cis-to-trans isomerase activity and mediates dehydrogenation of cis-phytoene, producing zeta-carotene via the intermediary of phytofluene by the symmetrical introduction of 2 double bonds at the C-11 and C-11' positions of phytoene. The polypeptide is zeta-carotene-forming phytoene desaturase (carA2) (Myxococcus xanthus).